A 159-amino-acid polypeptide reads, in one-letter code: 2-C-methyl-D-erythritol 2,4-cyclodiphosphate synthase (159 aa).

Residues Asp10 and His12 each contribute to the a divalent metal cation site. 4-CDP-2-C-methyl-D-erythritol 2-phosphate contacts are provided by residues 10–12 and 36–37; these read DVH and HS. His44 contributes to the a divalent metal cation binding site. 4-CDP-2-C-methyl-D-erythritol 2-phosphate is bound by residues 58 to 60, 134 to 137, Phe141, and Arg144; these read DIG and TTTE.

Belongs to the IspF family. In terms of assembly, homotrimer. Requires a divalent metal cation as cofactor.

The enzyme catalyses 4-CDP-2-C-methyl-D-erythritol 2-phosphate = 2-C-methyl-D-erythritol 2,4-cyclic diphosphate + CMP. Its pathway is isoprenoid biosynthesis; isopentenyl diphosphate biosynthesis via DXP pathway; isopentenyl diphosphate from 1-deoxy-D-xylulose 5-phosphate: step 4/6. Functionally, involved in the biosynthesis of isopentenyl diphosphate (IPP) and dimethylallyl diphosphate (DMAPP), two major building blocks of isoprenoid compounds. Catalyzes the conversion of 4-diphosphocytidyl-2-C-methyl-D-erythritol 2-phosphate (CDP-ME2P) to 2-C-methyl-D-erythritol 2,4-cyclodiphosphate (ME-CPP) with a corresponding release of cytidine 5-monophosphate (CMP). This Bacteroides thetaiotaomicron (strain ATCC 29148 / DSM 2079 / JCM 5827 / CCUG 10774 / NCTC 10582 / VPI-5482 / E50) protein is 2-C-methyl-D-erythritol 2,4-cyclodiphosphate synthase.